We begin with the raw amino-acid sequence, 486 residues long: uncharacterized protein (486 aa).

ABC transporter domains follow at residues 2–241 (VEFK…KVFV) and 249–486 (FEKD…LLFL). Residue 36-43 (GKNGEGKS) participates in ATP binding.

Belongs to the ABC transporter superfamily.

This is an uncharacterized protein from Borreliella burgdorferi (strain ATCC 35210 / DSM 4680 / CIP 102532 / B31) (Borrelia burgdorferi).